A 264-amino-acid chain; its full sequence is Glutamate racemase (264 aa).

Substrate-binding positions include 12–13 (DS) and 44–45 (YG). Catalysis depends on cysteine 76, which acts as the Proton donor/acceptor. A substrate-binding site is contributed by 77-78 (NT). Catalysis depends on cysteine 186, which acts as the Proton donor/acceptor. 187 to 188 (TH) contacts substrate.

This sequence belongs to the aspartate/glutamate racemases family.

The enzyme catalyses L-glutamate = D-glutamate. It functions in the pathway cell wall biogenesis; peptidoglycan biosynthesis. Provides the (R)-glutamate required for cell wall biosynthesis. The polypeptide is Glutamate racemase (Fusobacterium nucleatum subsp. nucleatum (strain ATCC 25586 / DSM 15643 / BCRC 10681 / CIP 101130 / JCM 8532 / KCTC 2640 / LMG 13131 / VPI 4355)).